A 486-amino-acid chain; its full sequence is Malonate-semialdehyde dehydrogenase (486 aa).

NAD(+)-binding residues include F154, K178, E181, R182, and S231. The Nucleophile role is filled by C286. E386 provides a ligand contact to NAD(+).

The protein belongs to the aldehyde dehydrogenase family. IolA subfamily. Homotetramer.

It catalyses the reaction 3-oxopropanoate + NAD(+) + CoA + H2O = hydrogencarbonate + acetyl-CoA + NADH + H(+). The catalysed reaction is 2-methyl-3-oxopropanoate + NAD(+) + CoA + H2O = propanoyl-CoA + hydrogencarbonate + NADH + H(+). It functions in the pathway polyol metabolism; myo-inositol degradation into acetyl-CoA; acetyl-CoA from myo-inositol: step 7/7. Functionally, catalyzes the oxidation of malonate semialdehyde (MSA) and methylmalonate semialdehyde (MMSA) into acetyl-CoA and propanoyl-CoA, respectively. Is involved in a myo-inositol catabolic pathway. Bicarbonate, and not CO2, is the end-product of the enzymatic reaction. In Bacillus cereus (strain ATCC 14579 / DSM 31 / CCUG 7414 / JCM 2152 / NBRC 15305 / NCIMB 9373 / NCTC 2599 / NRRL B-3711), this protein is Malonate-semialdehyde dehydrogenase.